The following is a 50-amino-acid chain: Protein PsbN (50 aa).

A helical membrane pass occupies residues Ile-14–Phe-34.

The protein belongs to the PsbN family.

It is found in the cellular thylakoid membrane. Functionally, may play a role in photosystem I and II biogenesis. This is Protein PsbN from Prochlorococcus marinus (strain MIT 9301).